We begin with the raw amino-acid sequence, 192 residues long: Phosphomevalonate kinase (192 aa).

Residues 17–23 (KRKSGKD) and R141 contribute to the ATP site. N170 contributes to the substrate binding site. ATP contacts are provided by H171 and Q180.

As to quaternary structure, monomer.

The protein localises to the cytoplasm. The protein resides in the cytosol. It carries out the reaction (R)-5-phosphomevalonate + ATP = (R)-5-diphosphomevalonate + ADP. It functions in the pathway isoprenoid biosynthesis; isopentenyl diphosphate biosynthesis via mevalonate pathway; isopentenyl diphosphate from (R)-mevalonate: step 2/3. Its function is as follows. Catalyzes the reversible ATP-dependent phosphorylation of mevalonate 5-phosphate to produce mevalonate diphosphate and ADP, a key step in the mevalonic acid mediated biosynthesis of isopentenyl diphosphate and other polyisoprenoid metabolites. The polypeptide is Phosphomevalonate kinase (Pmvk) (Mus musculus (Mouse)).